A 1407-amino-acid polypeptide reads, in one-letter code: DNA-directed RNA polymerase subunit beta' (1407 aa).

C70, C72, C85, and C88 together coordinate Zn(2+). D460, D462, and D464 together coordinate Mg(2+). Residues C814, C888, C895, and C898 each contribute to the Zn(2+) site. Residue K972 is modified to N6-acetyllysine.

The protein belongs to the RNA polymerase beta' chain family. In terms of assembly, the RNAP catalytic core consists of 2 alpha, 1 beta, 1 beta' and 1 omega subunit. When a sigma factor is associated with the core the holoenzyme is formed, which can initiate transcription. Mg(2+) serves as cofactor. Zn(2+) is required as a cofactor.

The enzyme catalyses RNA(n) + a ribonucleoside 5'-triphosphate = RNA(n+1) + diphosphate. Functionally, DNA-dependent RNA polymerase catalyzes the transcription of DNA into RNA using the four ribonucleoside triphosphates as substrates. This Shigella boydii serotype 18 (strain CDC 3083-94 / BS512) protein is DNA-directed RNA polymerase subunit beta'.